The chain runs to 44 residues: Conotoxin Cl9a (44 aa).

Glu7, Glu8, and Glu24 each carry 4-carboxyglutamate. 3 disulfides stabilise this stretch: Cys9–Cys33, Cys15–Cys40, and Cys23–Cys42.

In terms of tissue distribution, expressed by the venom duct.

The protein resides in the secreted. The sequence is that of Conotoxin Cl9a from Californiconus californicus (California cone).